Consider the following 257-residue polypeptide: Major prion protein (257 aa).

An N-terminal signal peptide occupies residues 1-24 (MVKSHIGGWILLLFVATWSDVGLC). The interaction with GRB2, ERI3 and SYN1 stretch occupies residues 25–234 (KKRPKPGGWN…ESEAYYQRGA (210 aa)). Residues 28–110 (PKPGGWNTGG…GQWGKPNKPK (83 aa)) are disordered. Composition is skewed to gly residues over residues 33–48 (WNTG…GSPG) and 55–101 (QGGG…GSHG). Tandem repeats lie at residues 54–62 (PQGGGGWGQ), 63–70 (PHGGGWGQ), 71–78 (PHGGGWGQ), 79–86 (PHGGGWGQ), and 87–95 (PHGGGGWGQ). Positions 54–95 (PQGGGGWGQPHGGGWGQPHGGGWGQPHGGGWGQPHGGGGWGQ) are 5 X 8 AA tandem repeats of P-H-G-G-G-W-G-Q. Cu(2+) contacts are provided by H64, G65, G66, H72, G73, G74, H80, G81, G82, H88, G90, and G91. C183 and C218 are disulfide-bonded. 2 N-linked (GlcNAc...) asparagine glycosylation sites follow: N185 and N201. A234 is lipidated: GPI-anchor amidated alanine. A propeptide spans 235-257 (SAILFSPPPVILLISLLILLIVG) (removed in mature form).

Belongs to the prion family. Monomer and homodimer. Has a tendency to aggregate into amyloid fibrils containing a cross-beta spine, formed by a steric zipper of superposed beta-strands. Soluble oligomers may represent an intermediate stage on the path to fibril formation. Copper binding may promote oligomerization. Interacts with GRB2, APP, ERI3/PRNPIP and SYN1. Mislocalized cytosolically exposed PrP interacts with MGRN1; this interaction alters MGRN1 subcellular location and causes lysosomal enlargement. Interacts with KIAA1191.

The protein resides in the cell membrane. The protein localises to the golgi apparatus. Its primary physiological function is unclear. Has cytoprotective activity against internal or environmental stresses. May play a role in neuronal development and synaptic plasticity. May be required for neuronal myelin sheath maintenance. May play a role in iron uptake and iron homeostasis. Soluble oligomers are toxic to cultured neuroblastoma cells and induce apoptosis (in vitro). Association with GPC1 (via its heparan sulfate chains) targets PRNP to lipid rafts. Also provides Cu(2+) or Zn(2+) for the ascorbate-mediated GPC1 deaminase degradation of its heparan sulfate side chains. This is Major prion protein from Vulpes lagopus (Arctic fox).